A 492-amino-acid polypeptide reads, in one-letter code: N-succinylglutamate 5-semialdehyde dehydrogenase (492 aa).

220-225 contributes to the NAD(+) binding site; the sequence is GSANTG. Active-site residues include Glu-243 and Cys-277.

The protein belongs to the aldehyde dehydrogenase family. AstD subfamily.

The catalysed reaction is N-succinyl-L-glutamate 5-semialdehyde + NAD(+) + H2O = N-succinyl-L-glutamate + NADH + 2 H(+). The protein operates within amino-acid degradation; L-arginine degradation via AST pathway; L-glutamate and succinate from L-arginine: step 4/5. In terms of biological role, catalyzes the NAD-dependent reduction of succinylglutamate semialdehyde into succinylglutamate. The chain is N-succinylglutamate 5-semialdehyde dehydrogenase from Escherichia coli O17:K52:H18 (strain UMN026 / ExPEC).